The chain runs to 290 residues: Probable 2-(5''-triphosphoribosyl)-3'-dephosphocoenzyme-A synthase (290 aa).

It belongs to the CitG/MdcB family.

It catalyses the reaction 3'-dephospho-CoA + ATP = 2'-(5''-triphospho-alpha-D-ribosyl)-3'-dephospho-CoA + adenine. Its function is as follows. Involved in the formation of 2-(5''-phosphoribosyl)-3'-dephosphocoenzyme-A, the prosthetic group of the acyl-carrier protein of the malonate decarboxylase. This is Probable 2-(5''-triphosphoribosyl)-3'-dephosphocoenzyme-A synthase from Stutzerimonas stutzeri (strain A1501) (Pseudomonas stutzeri).